A 127-amino-acid chain; its full sequence is Small ribosomal subunit protein uS11 (127 aa).

The protein belongs to the universal ribosomal protein uS11 family. Part of the 30S ribosomal subunit. Interacts with proteins S7 and S18. Binds to IF-3.

Located on the platform of the 30S subunit, it bridges several disparate RNA helices of the 16S rRNA. Forms part of the Shine-Dalgarno cleft in the 70S ribosome. This is Small ribosomal subunit protein uS11 from Streptococcus gordonii (strain Challis / ATCC 35105 / BCRC 15272 / CH1 / DL1 / V288).